Reading from the N-terminus, the 518-residue chain is DNA nucleotidylexotransferase (518 aa).

The short motif at 11-17 is the Nuclear localization signal element; that stretch reads FGKKRQK. In terms of domain architecture, BRCT spans 27–124; it reads IYEIKFHEFV…KPVDTKGKYQ (98 aa). The interval 153–518 is mediates interaction with DNTTIP2; sequence SQYACQRRTT…EYIQPSERNA (366 aa). The interval 260 to 264 is involved in DNA binding; sequence VGLKT. A 2'-deoxyribonucleoside 5'-triphosphate is bound by residues 335–340 and 344–347; these read GFRRGK and HDVD. Mg(2+)-binding residues include Asp345, Asp347, and Asp442. 457–458 is a binding site for a 2'-deoxyribonucleoside 5'-triphosphate; the sequence is GW.

The protein belongs to the DNA polymerase type-X family. Interacts with PRP19 and DNTTIP1. Interacts with TRERF1. Forms a ternary complex with DNTTIP2 and core histone. Released from this complex by PCNA. Mg(2+) serves as cofactor.

The protein localises to the nucleus. It carries out the reaction DNA(n) + a 2'-deoxyribonucleoside 5'-triphosphate = DNA(n+1) + diphosphate. Template-independent DNA polymerase which catalyzes the random addition of deoxynucleoside 5'-triphosphate to the 3'-end of a DNA initiator. One of the in vivo functions of this enzyme is the addition of nucleotides at the junction (N region) of rearranged Ig heavy chain and T-cell receptor gene segments during the maturation of B- and T-cells. The polypeptide is DNA nucleotidylexotransferase (DNTT) (Monodelphis domestica (Gray short-tailed opossum)).